We begin with the raw amino-acid sequence, 189 residues long: Xanthine phosphoribosyltransferase (189 aa).

Residues leucine 20 and asparagine 27 each contribute to the xanthine site. 128–132 (ANGQA) is a binding site for 5-phospho-alpha-D-ribose 1-diphosphate. Lysine 156 serves as a coordination point for xanthine.

This sequence belongs to the purine/pyrimidine phosphoribosyltransferase family. Xpt subfamily. Homodimer.

It localises to the cytoplasm. The catalysed reaction is XMP + diphosphate = xanthine + 5-phospho-alpha-D-ribose 1-diphosphate. It participates in purine metabolism; XMP biosynthesis via salvage pathway; XMP from xanthine: step 1/1. Converts the preformed base xanthine, a product of nucleic acid breakdown, to xanthosine 5'-monophosphate (XMP), so it can be reused for RNA or DNA synthesis. In Leuconostoc mesenteroides subsp. mesenteroides (strain ATCC 8293 / DSM 20343 / BCRC 11652 / CCM 1803 / JCM 6124 / NCDO 523 / NBRC 100496 / NCIMB 8023 / NCTC 12954 / NRRL B-1118 / 37Y), this protein is Xanthine phosphoribosyltransferase.